The sequence spans 233 residues: MANQFIFQDVPQRNLATFNPEVGYVAFIAKHGAQLNFDTVRFFFLNQKKAKMVLSKTAQPSVDLTFGGIKFTLVNNHFPQYTANPVPDTALTLHRLSGYLAKWVADQCKTNQIKLAEAMEKIVMPLAEVKGCTWTEGLTMYLGFAPGAEMFLETFEFYPLVIDMHRVLKDGMDVNFMRKVLRQRYGTLTAEQWMTQKIDAVRAAFNAVGQLSWAKSGFSPAARAFLAQFGINI.

12 residues coordinate RNA: Lys48, Lys51, Asn76, His77, Arg95, Val123, Pro125, Glu128, Arg166, Arg182, Gln183, and Arg184.

It belongs to the orthobunyavirus nucleocapsid protein family. As to quaternary structure, homotetramer. Binds the viral genomic RNA.

It is found in the virion. Encapsidates the genome protecting it from nucleases. The encapsidated genomic RNA is termed the nucleocapsid (NC) and serves as template for transcription and replication. The NC have a helical organization. The chain is Nucleoprotein (N) from Bos taurus (Bovine).